The following is a 266-amino-acid chain: 4-hydroxy-tetrahydrodipicolinate reductase (266 aa).

10-15 (GPRGRM) provides a ligand contact to NAD(+). Residue K38 coordinates NADP(+). Residues 99–101 (GTT) and 125–128 (APNF) contribute to the NAD(+) site. The active-site Proton donor/acceptor is H155. A (S)-2,3,4,5-tetrahydrodipicolinate-binding site is contributed by H156. K159 acts as the Proton donor in catalysis. 165-166 (GT) lines the (S)-2,3,4,5-tetrahydrodipicolinate pocket.

The protein belongs to the DapB family.

Its subcellular location is the cytoplasm. The enzyme catalyses (S)-2,3,4,5-tetrahydrodipicolinate + NAD(+) + H2O = (2S,4S)-4-hydroxy-2,3,4,5-tetrahydrodipicolinate + NADH + H(+). The catalysed reaction is (S)-2,3,4,5-tetrahydrodipicolinate + NADP(+) + H2O = (2S,4S)-4-hydroxy-2,3,4,5-tetrahydrodipicolinate + NADPH + H(+). It participates in amino-acid biosynthesis; L-lysine biosynthesis via DAP pathway; (S)-tetrahydrodipicolinate from L-aspartate: step 4/4. Its function is as follows. Catalyzes the conversion of 4-hydroxy-tetrahydrodipicolinate (HTPA) to tetrahydrodipicolinate. This chain is 4-hydroxy-tetrahydrodipicolinate reductase, found in Bacillus mycoides (strain KBAB4) (Bacillus weihenstephanensis).